Here is a 488-residue protein sequence, read N- to C-terminus: Putative BPI/LBP family protein At1g04970 (488 aa).

The first 24 residues, 1 to 24 (MDVGRCFLFLLLPSFFFLPSQTQS), serve as a signal peptide directing secretion. Residues asparagine 79, asparagine 109, asparagine 231, asparagine 242, and asparagine 341 are each glycosylated (N-linked (GlcNAc...) asparagine).

It belongs to the BPI/LBP/Plunc superfamily. BPI/LBP (TC 1.C.40) family.

This chain is Putative BPI/LBP family protein At1g04970, found in Arabidopsis thaliana (Mouse-ear cress).